Reading from the N-terminus, the 389-residue chain is Type 2 DNA topoisomerase 6 subunit A (389 aa).

Residues 13-161 (KARLRAAEVM…MLILSKEKGK (149 aa)) enclose the Topo IIA-type catalytic domain. The active-site O-(5'-phospho-DNA)-tyrosine intermediate is the Y107. Mg(2+) contacts are provided by E208 and D260.

Belongs to the TOP6A family. As to quaternary structure, homodimer. Heterotetramer of two Top6A and two Top6B chains. Requires Mg(2+) as cofactor.

The enzyme catalyses ATP-dependent breakage, passage and rejoining of double-stranded DNA.. In terms of biological role, relaxes both positive and negative superturns and exhibits a strong decatenase activity. This Aeropyrum pernix (strain ATCC 700893 / DSM 11879 / JCM 9820 / NBRC 100138 / K1) protein is Type 2 DNA topoisomerase 6 subunit A.